The primary structure comprises 1536 residues: Alpha-2-macroglobulin (1536 aa).

Positions 1-23 (MGMKRLIFLVFLLISFSLFGGYA) are cleaved as a signal peptide. The isoglutamyl cysteine thioester (Cys-Gln) cross-link spans 919–922 (CVEQ).

The protein belongs to the protease inhibitor I39 (alpha-2-macroglobulin) family. Bacterial alpha-2-macroglobulin subfamily.

Protects the bacterial cell from peptidases. The chain is Alpha-2-macroglobulin from Thermotoga maritima (strain ATCC 43589 / DSM 3109 / JCM 10099 / NBRC 100826 / MSB8).